The sequence spans 47 residues: UPF0391 membrane protein rrnAC2507 (47 aa).

Helical transmembrane passes span 5–25 (VVLV…IAGL) and 27–47 (FRVA…TFLL).

This sequence belongs to the UPF0391 family.

It localises to the cell membrane. This Haloarcula marismortui (strain ATCC 43049 / DSM 3752 / JCM 8966 / VKM B-1809) (Halobacterium marismortui) protein is UPF0391 membrane protein rrnAC2507.